Reading from the N-terminus, the 564-residue chain is Nucleoprotein (564 aa).

The segment at 54–236 is binding site for the cap structure m7GTP; it reads LRKNKRGEED…VTKDESSINI (183 aa). 2 residues coordinate Mn(2+): Asp-380 and Glu-382. The Zn(2+) site is built by Glu-390, Cys-497, His-500, and Cys-525. Asp-529 lines the Mn(2+) pocket.

Belongs to the arenaviridae nucleocapsid protein family. As to quaternary structure, homomultimerizes to form the nucleocapsid. Binds to viral genomic RNA. Interacts with glycoprotein G2. Interacts with protein Z; this interaction probably directs the encapsidated genome to budding sites. Interacts with protein L; this interaction does not interfere with Z-L interaction. Interacts with host IKBKE (via Protein kinase domain); the interaction inhibits IKBKE kinase activity.

The protein resides in the virion. Its subcellular location is the host cytoplasm. In terms of biological role, encapsidates the genome, protecting it from nucleases. The encapsidated genomic RNA is termed the nucleocapsid (NC). Serves as template for viral transcription and replication. The increased presence of protein N in host cell does not seem to trigger the switch from transcription to replication as observed in other negative strain RNA viruses. Through the interaction with host IKBKE, strongly inhibits the phosphorylation and nuclear translocation of host IRF3, a protein involved in interferon activation pathway, leading to the inhibition of interferon-beta and IRF3-dependent promoters activation. Also encodes a functional 3'-5' exoribonuclease that degrades preferentially dsRNA substrates and thereby participates in the suppression of interferon induction. This Calomys callosus (Large vesper mouse) protein is Nucleoprotein.